A 447-amino-acid chain; its full sequence is N-succinylarginine dihydrolase (447 aa).

Substrate-binding positions include 19 to 28 (AGLSFGNVAS), asparagine 110, and 137 to 138 (HR). The active site involves glutamate 174. Arginine 214 provides a ligand contact to substrate. Histidine 250 is a catalytic residue. Substrate contacts are provided by aspartate 252 and asparagine 364. The Nucleophile role is filled by cysteine 370.

This sequence belongs to the succinylarginine dihydrolase family. In terms of assembly, homodimer.

It carries out the reaction N(2)-succinyl-L-arginine + 2 H2O + 2 H(+) = N(2)-succinyl-L-ornithine + 2 NH4(+) + CO2. Its pathway is amino-acid degradation; L-arginine degradation via AST pathway; L-glutamate and succinate from L-arginine: step 2/5. Its function is as follows. Catalyzes the hydrolysis of N(2)-succinylarginine into N(2)-succinylornithine, ammonia and CO(2). The protein is N-succinylarginine dihydrolase of Idiomarina loihiensis (strain ATCC BAA-735 / DSM 15497 / L2-TR).